Reading from the N-terminus, the 964-residue chain is MTLLEPEMLMMAVQSVLQLKLQQRRTREELVSQGIMPPLKSPAAFHEQRRSLERARTEDYLKRKIRSRPERAELVRMHILEETSAEPSLQAKQLKLKRARLADDLNEKIAQRPGPMELVEKNILPVESSLKEAIIVGQVNYPKVADSSSFDEDSSDALSPEQPASHESQGSVPSPLESRVSDPLPSATSISPTQVLSQLPMAPDPGETLFLAEQPPLPPAPLLPPSLANGSIVPTAKPAPTLIKQSQPKSASEKSQRSKKAKELKPKVKKLKYHQYIPPDQKQDKGAPAMDSSYAKILQQQQLFLQLQILNQQQQQQQQQHYNYQAILPAPPKPSAETPGSSAPTPSRSLSTSSSPSSGTPGPSGLARQSSTALAAKPGALPANLDDMKVAELKQELKLRSLPVSGTKTELIERLRAYQDQVSPAPGAPKAPATTSVLSKAGEVVVAFPAALLSTGSALVTAGLAPAEMVVATVTSNGMVKFGSTGSTPPVSPTPSERSLLSTGDENSTPGDAFGEMVTSPLTQLTLQASPLQIVKEEGARAASCCLSPGARAELEGLDKDQMLQEKDKQIEELTRMLQQKQQLVELLRLQLEQQKRAQQPAPASSPVKRESGFSSCQLSCQPQGSAHAFGSGLVVPTTNHGDTQAPAPESPPVVVKQEAGPPEPDLAPSSQLLLGSQGTSFLKRVSPPTLVTDSTGTHLILTVTNKSADGPGLPAGSPQQPLSQPGSPAPGPPAQMDLEHPPQPPFATPTSLLKKEPPGYEETVTQQPKQQENGSSSQHMDDLFDILIQSGEISADFKEPPSLPGKEKSPPAAAAYGPPLTPQPSPLSELPQAAPPPGSPTLPGRLEDFLESSTGLPLLTSGHEGPEPLSLIDDLHSQMLSSSAILDHPPSPMDTSELHFAPEPSSGMGLDLAVGHLDSMDWLELSSGGPVLSLAPLSTAAPSLFSMDFLDGHDLQLHWDSCL.

Residues 1–291 are mediates interaction with SCAI and ACTB; that stretch reads MTLLEPEMLM…KQDKGAPAMD (291 aa). One copy of the RPEL 1 repeat lies at 15–40; it reads SVLQLKLQQRRTREELVSQGIMPPLK. Position 41 is a phosphoserine (Ser41). Positions 41–58 are intervening spacer sequence 1; that stretch reads SPAAFHEQRRSLERARTE. The stretch at 59 to 84 is one RPEL 2 repeat; that stretch reads DYLKRKIRSRPERAELVRMHILEETS. Positions 62 to 100 match the Bipartite Nuclear localization signal motif; it reads KRKIRSRPERAELVRMHILEETSAEPSLQAKQLKLKRAR. The tract at residues 85-102 is intervening spacer sequence 2; the sequence is AEPSLQAKQLKLKRARLA. Residues 103–128 form an RPEL 3 repeat; it reads DDLNEKIAQRPGPMELVEKNILPVES. Disordered regions lie at residues 145–292 and 328–371; these read ADSS…AMDS and LPAP…RQSS. A phosphoserine mark is found at Ser159, Ser174, and Ser191. Residues 186–197 show a composition bias toward polar residues; it reads SATSISPTQVLS. Pro residues predominate over residues 215–224; the sequence is PPLPPAPLLP. Over residues 251–266 the composition is skewed to basic and acidic residues; that stretch reads ASEKSQRSKKAKELKP. The span at 340 to 365 shows a compositional bias: low complexity; sequence GSSAPTPSRSLSTSSSPSSGTPGPSG. A phosphoserine mark is found at Ser349 and Ser351. Thr352 carries the post-translational modification Phosphothreonine. Phosphoserine occurs at positions 355 and 358. At Thr360 the chain carries Phosphothreonine. Residue Ser371 is modified to Phosphoserine. Residues 385-419 form the SAP domain; sequence LDDMKVAELKQELKLRSLPVSGTKTELIERLRAYQ. 2 positions are modified to phosphoserine: Ser423 and Ser484. A disordered region spans residues 484 to 508; that stretch reads STGSTPPVSPTPSERSLLSTGDENS. Residue Thr485 is modified to Phosphothreonine. Residue Ser487 is modified to Phosphoserine. Thr488 bears the Phosphothreonine mark. Residue Ser492 is modified to Phosphoserine. Phosphothreonine is present on Thr494. Residue Ser496 is modified to Phosphoserine. Over residues 497 to 508 the composition is skewed to polar residues; that stretch reads ERSLLSTGDENS. 4 positions are modified to phosphoserine: Ser520, Ser530, Ser544, and Ser548. Residues 552–600 adopt a coiled-coil conformation; the sequence is RAELEGLDKDQMLQEKDKQIEELTRMLQQKQQLVELLRLQLEQQKRAQQ. Ser605, Ser606, Ser651, Ser687, Ser718, Ser724, and Ser728 each carry phosphoserine. The tract at residues 638–673 is disordered; that stretch reads TTNHGDTQAPAPESPPVVVKQEAGPPEPDLAPSSQL. Disordered regions lie at residues 706-779 and 796-849; these read NKSA…SSSQ and ADFK…RLED. Residues 715 to 727 show a composition bias toward low complexity; it reads PAGSPQQPLSQPG. A compositionally biased stretch (polar residues) spans 764–779; sequence TVTQQPKQQENGSSSQ. A compositionally biased stretch (basic and acidic residues) spans 796–810; the sequence is ADFKEPPSLPGKEKS. Residue Ser810 is modified to Phosphoserine. A Phosphothreonine modification is found at Thr822. Residues Ser826 and Ser840 each carry the phosphoserine modification. Thr842 carries the post-translational modification Phosphothreonine. Ser892 carries the phosphoserine modification.

As to quaternary structure, interacts with SRF, forming the SRF-MRTFA nuclear complex which binds the 5'-CArG-3' consensus motif (CArG box) on DNA via SRF. Interacts (via RPEL repeats) with globular actin (G-actin), thereby regulating its subcellular location and activity of the complex formed with SRF. Either forms a trivalent (by binding three G-actin monomers) or pentavalent (by binding five G-actin monomers) complex with G-actin. Forms a nuclear ternary complex with SCAI and SRF, leading to suppress MRTFA-induced SRF transcriptional activity. Interacts with beta-actin (ACTB); interaction with ACTB prevents interaction with SCAI. Interacts with MRTFB. Phosphorylation at Ser-41 by Erk inhibits binding of globular actin (G-actin), unmasking the nuclear localization signal (NLS) and promoting nuclear import. As to expression, expressed in heart, brain, spleen, lung, liver, muscle, kidney and testis.

It localises to the cytoplasm. The protein resides in the nucleus. Its function is as follows. Transcription coactivator that associates with the serum response factor (SRF) transcription factor to control expression of genes regulating the cytoskeleton during development, morphogenesis and cell migration. The SRF-MRTFA complex activity responds to Rho GTPase-induced changes in cellular globular actin (G-actin) concentration, thereby coupling cytoskeletal gene expression to cytoskeletal dynamics. MRTFA binds G-actin via its RPEL repeats, regulating activity of the MRTFA-SRF complex. Activity is also regulated by filamentous actin (F-actin) in the nucleus. This is Myocardin-related transcription factor A (Mrtfa) from Mus musculus (Mouse).